A 178-amino-acid polypeptide reads, in one-letter code: Large ribosomal subunit protein uL6 (178 aa).

The protein belongs to the universal ribosomal protein uL6 family. Part of the 50S ribosomal subunit.

In terms of biological role, this protein binds to the 23S rRNA, and is important in its secondary structure. It is located near the subunit interface in the base of the L7/L12 stalk, and near the tRNA binding site of the peptidyltransferase center. The protein is Large ribosomal subunit protein uL6 of Campylobacter concisus (strain 13826).